The chain runs to 152 residues: Cysteine and tyrosine-rich protein 1 (152 aa).

Positions 1–27 (MDIPRSLRHPEILLVLLLSEITDICQA) are cleaved as a signal peptide. At 28-59 (YCEADCKSYCCDGTPPYCCSYYAYIGNVLSGT) the chain is on the extracellular side. A helical membrane pass occupies residues 60-80 (AIAGIVFGIVFIMGVIAGIAI). Topologically, residues 81–152 (CICMCMKSSR…PPPYPGPSRK (72 aa)) are cytoplasmic. The segment at 130 to 152 (PYTPTPPMSHYPSPPPYPGPSRK) is disordered.

It belongs to the CYYR1 family.

Its subcellular location is the membrane. The sequence is that of Cysteine and tyrosine-rich protein 1 (cyyr1) from Xenopus laevis (African clawed frog).